A 256-amino-acid chain; its full sequence is Major prion protein (256 aa).

An N-terminal signal peptide occupies residues 1–24 (MVKSHIGSWILVLFVAMWSDVGLC). Residues 25–233 (KKRPKPGGGW…ESQAYYQRGA (209 aa)) form an interaction with GRB2, ERI3 and SYN1 region. Positions 28-110 (PKPGGGWNTG…QWNKPSKPKT (83 aa)) are disordered. 5 tandem repeats follow at residues 54-62 (PQGGGGWGQ), 63-70 (PHGGGWGQ), 71-78 (PHGGGWGQ), 79-86 (PHGGGWGQ), and 87-95 (PHGGGGWGQ). The tract at residues 54 to 95 (PQGGGGWGQPHGGGWGQPHGGGWGQPHGGGWGQPHGGGGWGQ) is 5 X 8 AA tandem repeats of P-H-G-G-G-W-G-Q. The span at 55 to 97 (QGGGGWGQPHGGGWGQPHGGGWGQPHGGGWGQPHGGGGWGQGG) shows a compositional bias: gly residues. Positions 64, 65, 66, 72, 73, 74, 80, 81, 82, 88, 90, and 91 each coordinate Cu(2+). Cys-182 and Cys-217 form a disulfide bridge. 2 N-linked (GlcNAc...) (complex) asparagine glycosylation sites follow: Asn-184 and Asn-200. The GPI-anchor amidated alanine moiety is linked to residue Ala-233. A propeptide spans 234–256 (SVILFSSPPVILLISFLIFLIVG) (removed in mature form).

Belongs to the prion family. As to quaternary structure, monomer and homodimer. Has a tendency to aggregate into amyloid fibrils containing a cross-beta spine, formed by a steric zipper of superposed beta-strands. Soluble oligomers may represent an intermediate stage on the path to fibril formation. Copper binding may promote oligomerization. Interacts with GRB2, APP, ERI3/PRNPIP and SYN1. Mislocalized cytosolically exposed PrP interacts with MGRN1; this interaction alters MGRN1 subcellular location and causes lysosomal enlargement. Interacts with KIAA1191.

It localises to the cell membrane. It is found in the golgi apparatus. In terms of biological role, its primary physiological function is unclear. Has cytoprotective activity against internal or environmental stresses. May play a role in neuronal development and synaptic plasticity. May be required for neuronal myelin sheath maintenance. May play a role in iron uptake and iron homeostasis. Soluble oligomers are toxic to cultured neuroblastoma cells and induce apoptosis (in vitro). Association with GPC1 (via its heparan sulfate chains) targets PRNP to lipid rafts. Also provides Cu(2+) or Zn(2+) for the ascorbate-mediated GPC1 deaminase degradation of its heparan sulfate side chains. This Ovis aries (Sheep) protein is Major prion protein (PRNP).